A 556-amino-acid chain; its full sequence is Innexin-7 (556 aa).

Helical transmembrane passes span 21–41, 127–147, and 213–233; these read LVAS…AVLI, FFLL…KYFA, and AYYV…NVIL. N-linked (GlcNAc...) asparagine glycosylation occurs at N267. Residues 310–330 form a helical membrane-spanning segment; the sequence is IFVFLWAWYILLTAFTVGNLF. A disordered region spans residues 431 to 556; sequence DESQVESGKN…IPKTAEKKHW (126 aa). The segment covering 435-447 has biased composition (polar residues); the sequence is VESGKNTAPSTSH. Residues 452-461 are compositionally biased toward basic and acidic residues; that stretch reads RGTEQLEKNV. Over residues 463–474 the composition is skewed to polar residues; the sequence is SRQGSLSTQLRP. Residues 500–513 show a composition bias toward basic residues; the sequence is KGSKKPSPTKKKAS. Residues 514–527 are compositionally biased toward low complexity; it reads SKNSPQSSSNSRRP. Over residues 539–556 the composition is skewed to basic and acidic residues; that stretch reads HHHEPDSKIPKTAEKKHW.

It belongs to the pannexin family.

It is found in the cell membrane. The protein localises to the cell junction. It localises to the gap junction. Its function is as follows. Structural component of the gap junctions. The chain is Innexin-7 (inx-7) from Caenorhabditis elegans.